The primary structure comprises 414 residues: WD repeat-containing protein jip5 (414 aa).

5 WD repeats span residues 9–48 (PLSA…SDTD), 73–112 (RHKG…VENK), 118–159 (AKDG…SPVS), 222–263 (VSSV…DQDE), and 319–356 (DETE…DGMD). The interval 39–65 (RLPSEESDTDGDGAESTSSSRNGKGHI) is disordered. The interval 352–414 (SDGMDGDMAG…QDIMGFADID (63 aa)) is disordered. The segment covering 369–383 (DSDDSDDGDDSDDSD) has biased composition (acidic residues).

Belongs to the WD repeat WDR55 family.

It is found in the nucleus. The protein localises to the nucleolus. This is WD repeat-containing protein jip5 (jip5) from Neosartorya fischeri (strain ATCC 1020 / DSM 3700 / CBS 544.65 / FGSC A1164 / JCM 1740 / NRRL 181 / WB 181) (Aspergillus fischerianus).